The primary structure comprises 180 residues: MKTIEVDDELYAYIASHTRHIGESASDILRRMLKFSAASQPATPVSKEVRASNVVAEAKTVAPVKDKVRAVRELLLSDEYAEQKKAVNRFLLVLTTLYSLDNKAFAEATESLHGRTRVYFAADEQTLIQNGNQTKPKQVPGTPYWVITNTNTGRKRSMVEHIMQSMQFPAELIEKVCGTI.

3 interaction with DNA regions span residues 86 to 87 (AV), 115 to 119 (RTRVY), and 149 to 155 (NTNTGRK).

It belongs to the SeqA family. In terms of assembly, homodimer. Polymerizes to form helical filaments.

Its subcellular location is the cytoplasm. Negative regulator of replication initiation, which contributes to regulation of DNA replication and ensures that replication initiation occurs exactly once per chromosome per cell cycle. Binds to pairs of hemimethylated GATC sequences in the oriC region, thus preventing assembly of replication proteins and re-initiation at newly replicated origins. Repression is relieved when the region becomes fully methylated. The sequence is that of Negative modulator of initiation of replication from Enterobacter sp. (strain 638).